Consider the following 582-residue polypeptide: ATP-dependent lipid A-core flippase (582 aa).

The next 5 helical transmembrane spans lie at L16 to L36, V63 to Y83, I153 to V173, P253 to P273, and V275 to M295. The 283-residue stretch at I28 to R310 folds into the ABC transmembrane type-1 domain. In terms of domain architecture, ABC transporter spans V342–M578. G376–S383 contacts ATP.

Belongs to the ABC transporter superfamily. Lipid exporter (TC 3.A.1.106) family. As to quaternary structure, homodimer.

It is found in the cell inner membrane. The catalysed reaction is ATP + H2O + lipid A-core oligosaccharideSide 1 = ADP + phosphate + lipid A-core oligosaccharideSide 2.. Involved in lipopolysaccharide (LPS) biosynthesis. Translocates lipid A-core from the inner to the outer leaflet of the inner membrane. Transmembrane domains (TMD) form a pore in the inner membrane and the ATP-binding domain (NBD) is responsible for energy generation. The protein is ATP-dependent lipid A-core flippase of Escherichia coli O157:H7.